We begin with the raw amino-acid sequence, 198 residues long: Guanine nucleotide-binding protein subunit alpha-11 (198 aa).

Positions 1-11 (LLGTGESGKST) are G1 motif. One can recognise a G-alpha domain in the interval 1-198 (LLGTGESGKS…LSEYDHVLVE (198 aa)). GTP-binding positions include 3-10 (GTGESGKS) and 137-140 (LRVR). Mg(2+) is bound at residue Ser-10. The interval 135–143 (DVLRVRVPT) is G2 motif. Thr-143 contributes to the Mg(2+) binding site. Residues 158-167 (FRMVDVGGQR) are G3 motif.

The protein belongs to the G-alpha family. G(q) subfamily. G proteins are composed of 3 units; alpha, beta and gamma. The alpha chain contains the guanine nucleotide binding site. Interacts with RGS22. Interacts with NTSR1.

It localises to the cell membrane. The protein localises to the cytoplasm. It carries out the reaction GTP + H2O = GDP + phosphate + H(+). Its function is as follows. Guanine nucleotide-binding proteins (G proteins) function as transducers downstream of G protein-coupled receptors (GPCRs) in numerous signaling cascades. The alpha chain contains the guanine nucleotide binding site and alternates between an active, GTP-bound state and an inactive, GDP-bound state. Signaling by an activated GPCR promotes GDP release and GTP binding. The alpha subunit has a low GTPase activity that converts bound GTP to GDP, thereby terminating the signal. Both GDP release and GTP hydrolysis are modulated by numerous regulatory proteins. Signaling is mediated via phospholipase C-beta-dependent inositol lipid hydrolysis for signal propagation: activates phospholipase C-beta: following GPCR activation, GNA11 activates PLC-beta (PLCB1, PLCB2, PLCB3 or PLCB4), leading to production of diacylglycerol (DAG) and inositol 1,4,5-trisphosphate (IP3). Transduces FFAR4 signaling in response to long-chain fatty acids (LCFAs). Together with GNAQ, required for heart development. In the respiratory epithelium, transmits OXGR1-dependent signals that lead to downstream intracellular Ca(2+) release and mucocilliary clearance of airborne pathogens. The protein is Guanine nucleotide-binding protein subunit alpha-11 (GNA11) of Canis lupus familiaris (Dog).